The chain runs to 642 residues: Polyglycine hydrolase (642 aa).

The signal sequence occupies residues 1–23 (MYTSRLLLSNLASCLSLATLVAS). N-linked (GlcNAc...) asparagine glycosylation is found at asparagine 37, asparagine 100, asparagine 159, and asparagine 341. An intrachain disulfide couples cysteine 149 to cysteine 183. Serine 370 is a catalytic residue. 5 N-linked (GlcNAc...) asparagine glycosylation sites follow: asparagine 390, asparagine 407, asparagine 444, asparagine 487, and asparagine 494.

This sequence belongs to the peptidase S12 family.

It is found in the secreted. The catalysed reaction is a glycyl-glycyl-[protein] + H2O = N-terminal glycyl-[protein] + [protein]-C-terminal glycine. Its activity is regulated as follows. Not inhibited by phenylmethylsulfonyl fluoride (PMSF; serine peptidase class S1 inhibitor), clavulanic acid (beta-lactamase inhibitor) or ampicillin (penicillin-binding protein (PBP) inhibitor). Functionally, serine-type endopeptidase that cleaves Gly-Gly bonds in the polyglycine linker of host plant class IV chitinases to disrupt their chitin-binding, and thereby plays a role in lowering the defense responses of the host to the fungus. Degrades Z.mays Endochitinase A (CHIA). Degrades Z.mays Endochitinase B (CHIB). Has no activity on Z.mays CHIA following CHIA cleavage by fungalysin. This is Polyglycine hydrolase from Epicoccum sorghinum (Endophyte fungus).